Here is a 145-residue protein sequence, read N- to C-terminus: Transcriptional regulator MraZ (145 aa).

SpoVT-AbrB domains follow at residues 5–49 (TYNH…LESE) and 78–121 (TYKI…AKEV).

Belongs to the MraZ family. As to quaternary structure, forms oligomers.

The protein resides in the cytoplasm. It localises to the nucleoid. The protein is Transcriptional regulator MraZ of Ureaplasma parvum serovar 3 (strain ATCC 27815 / 27 / NCTC 11736).